Consider the following 703-residue polypeptide: Probable boron transporter 2 (703 aa).

The Cytoplasmic portion of the chain corresponds to 1 to 35 (MEETFVPFEGIKNDLKGRLMCYKQDWTGGIKAGFR). Residues 36-56 (ILAPTTYIFFASAIPVISFGE) traverse the membrane as a helical segment. Residues 57–75 (QLERSTDGVLTAVQTLAST) are Extracellular-facing. A helical transmembrane segment spans residues 76 to 96 (AICGIIHSIIGGQPLLILGVA). Over 97-120 (EPTVIMYTFMFNFAKGRPELGRNL) the chain is Cytoplasmic. The chain crosses the membrane as a helical span at residues 121 to 141 (FLAWSGWVCVWTSLILFVLAI). Topologically, residues 142–155 (CGACSFINRFTRVA) are extracellular. A helical transmembrane segment spans residues 156 to 176 (GELFGLLIAMLFMQQAIKGLV). Residues 177–195 (DEFRAPAREDLKLVEFLPS) are Cytoplasmic-facing. Residues 196–216 (WRFANGMFALVLSFGLLITAL) form a helical membrane-spanning segment. The Extracellular segment spans residues 217–233 (RSRKARSWRYGTGWLRS). Residues 234–254 (LVADYGVPLMVLVWTGVSYIP) form a helical membrane-spanning segment. Residues 255–289 (TGDVPKGIPRRLFSPNPWSPGAYENWTVVKEMLQV) are Cytoplasmic-facing. A helical membrane pass occupies residues 290-310 (PIVYIIGAFIPATMIAVLYYF). Residues 311 to 337 (DHSVASQLAQQKEFNLRKPSSYHYDLL) lie on the Extracellular side of the membrane. A helical transmembrane segment spans residues 338-358 (LLGFLTLMCGLLGIPPSNGVI). Residues 359–480 (PQSPMHTKSL…AVMVGGCVAA (122 aa)) are Cytoplasmic-facing. The chain crosses the membrane as a helical span at residues 481-501 (MPLLKMIPTSVLWGYFAFMAI). Topologically, residues 502-557 (ESLPGNQFWERILLLFTAPSRRFKVLEDNHATFVETVPFKTIAMFTIFQTTYLLTC) are extracellular. The chain crosses the membrane as a helical span at residues 558 to 578 (FGLTWIPIAGVMFPLLIMFLI). Over 579–703 (PVRQYILPRF…SPLNPSSSSK (125 aa)) the chain is Cytoplasmic. The segment at 678–703 (EMSPRLSGKGQNSPKPSPLNPSSSSK) is disordered.

This sequence belongs to the anion exchanger (TC 2.A.31.3) family.

The protein resides in the membrane. Its function is as follows. Probable boron transporter. Boron is essential for maintaining the integrity of plants cell walls. The chain is Probable boron transporter 2 (BOR2) from Arabidopsis thaliana (Mouse-ear cress).